The chain runs to 312 residues: Magnesium protoporphyrin IX methyltransferase, chloroplastic (312 aa).

Residues 1 to 39 (MPFAPSLLSSSSSVSQFLPRFPNATRFNVTPRSRAATVV) constitute a chloroplast transit peptide.

Belongs to the class I-like SAM-binding methyltransferase superfamily. Magnesium protoporphyrin O-methyltransferase family.

The protein resides in the plastid. It localises to the chloroplast membrane. It is found in the chloroplast thylakoid membrane. It carries out the reaction Mg-protoporphyrin IX + S-adenosyl-L-methionine = Mg-protoporphyrin IX 13-monomethyl ester + S-adenosyl-L-homocysteine. It participates in porphyrin-containing compound metabolism; chlorophyll biosynthesis. Regulated by the folate status via an increased concentration of S-adenosyl-homocysteine (AdoHcy), a potent inhibitor of most AdoMet-dependent methyltransferases. Its function is as follows. Converts Mg-protoporphyrin IX to Mg-protoporphyrin IX methylester using S-adenosyl-L-methionine as a cofactor. Involved in chloroplast-to-nucleus signaling by acting as a negative effector of nuclear photosynthetic gene expression. The chain is Magnesium protoporphyrin IX methyltransferase, chloroplastic (CHLM) from Arabidopsis thaliana (Mouse-ear cress).